The chain runs to 966 residues: Serine/threonine-protein phosphatase 6 regulatory subunit 2 (966 aa).

Residue Ser-289 is modified to Phosphoserine. Composition is skewed to basic and acidic residues over residues 408-424 and 669-687; these read TEASGSESRVEPPHENG and GPERGGQDGKASLEAHRDA. Disordered stretches follow at residues 408–436 and 657–707; these read TEASGSESRVEPPHENGNRSLETPQPAAS and GAPH…VEGD. Phosphoserine is present on residues Ser-771 and Ser-828. A disordered region spans residues 819-856; sequence ASDSSSSGGSHSEDGDQKAASAMDAVSRGPGREAPPLP.

This sequence belongs to the SAPS family. In terms of assembly, protein phosphatase 6 (PP6) holoenzyme is proposed to be a heterotrimeric complex formed by the catalytic subunit, a SAPS domain-containing subunit (PP6R) and an ankyrin repeat-domain containing regulatory subunit (ARS). Interacts with PPP6C and NFKBIE. Interacts with ANKRD28. As to expression, ubiquitously expressed with strongest expression in the testis followed by liver, heart, kidney, brain and placenta.

It localises to the cytoplasm. Functionally, regulatory subunit of protein phosphatase 6 (PP6). May function as a scaffolding PP6 subunit. Involved in the PP6-mediated dephosphorylation of NFKBIE opposing its degradation in response to TNF-alpha. The polypeptide is Serine/threonine-protein phosphatase 6 regulatory subunit 2 (PPP6R2) (Homo sapiens (Human)).